A 238-amino-acid polypeptide reads, in one-letter code: Large ribosomal subunit protein uL2 (238 aa).

The disordered stretch occupies residues Pro-201–His-238.

The protein belongs to the universal ribosomal protein uL2 family. As to quaternary structure, part of the 50S ribosomal subunit. Forms a bridge to the 30S subunit in the 70S ribosome.

Its function is as follows. One of the primary rRNA binding proteins. Required for association of the 30S and 50S subunits to form the 70S ribosome, for tRNA binding and peptide bond formation. It has been suggested to have peptidyltransferase activity; this is somewhat controversial. Makes several contacts with the 16S rRNA in the 70S ribosome. This is Large ribosomal subunit protein uL2 from Methanocella arvoryzae (strain DSM 22066 / NBRC 105507 / MRE50).